Consider the following 118-residue polypeptide: Small ribosomal subunit protein uS13 (118 aa).

The disordered stretch occupies residues 95-118; the sequence is LPVRGQRTRTNARTRKGPKKLINK.

The protein belongs to the universal ribosomal protein uS13 family. As to quaternary structure, part of the 30S ribosomal subunit. Forms a loose heterodimer with protein S19. Forms two bridges to the 50S subunit in the 70S ribosome.

Functionally, located at the top of the head of the 30S subunit, it contacts several helices of the 16S rRNA. In the 70S ribosome it contacts the 23S rRNA (bridge B1a) and protein L5 of the 50S subunit (bridge B1b), connecting the 2 subunits; these bridges are implicated in subunit movement. Contacts the tRNAs in the A and P-sites. In Blochmanniella floridana, this protein is Small ribosomal subunit protein uS13.